We begin with the raw amino-acid sequence, 161 residues long: Transcription elongation factor GreA (161 aa).

Residues 45 to 72 are a coiled coil; the sequence is NAEYHSAKEKLKLIDIQIAELNAVISKA.

This sequence belongs to the GreA/GreB family.

Functionally, necessary for efficient RNA polymerase transcription elongation past template-encoded arresting sites. The arresting sites in DNA have the property of trapping a certain fraction of elongating RNA polymerases that pass through, resulting in locked ternary complexes. Cleavage of the nascent transcript by cleavage factors such as GreA or GreB allows the resumption of elongation from the new 3'terminus. GreA releases sequences of 2 to 3 nucleotides. In Aliarcobacter butzleri (strain RM4018) (Arcobacter butzleri), this protein is Transcription elongation factor GreA.